The primary structure comprises 311 residues: 4-hydroxyproline 2-epimerase (311 aa).

Cys-88 serves as the catalytic Proton acceptor. Residues 89-90 (GH), His-208, and Asp-232 each bind substrate. Residue Cys-236 is the Proton donor of the active site. Position 237–238 (237–238 (GT)) interacts with substrate.

It belongs to the proline racemase family.

It carries out the reaction trans-4-hydroxy-L-proline = cis-4-hydroxy-D-proline. Functionally, catalyzes the epimerization of trans-4-hydroxy-L-proline (t4LHyp) to cis-4-hydroxy-D-proline (c4DHyp). Is likely involved in a degradation pathway that converts t4LHyp to alpha-ketoglutarate. Displays no proline racemase activity. This is 4-hydroxyproline 2-epimerase from Chromohalobacter salexigens (strain ATCC BAA-138 / DSM 3043 / CIP 106854 / NCIMB 13768 / 1H11).